Consider the following 566-residue polypeptide: Malate synthase, glyoxysomal (566 aa).

Catalysis depends on Arg-179, which acts as the Proton acceptor. Residue Asp-465 is the Proton donor of the active site. The short motif at Ser-564 to Leu-566 is the Microbody targeting signal element.

The protein belongs to the malate synthase family.

The protein localises to the glyoxysome. It carries out the reaction glyoxylate + acetyl-CoA + H2O = (S)-malate + CoA + H(+). The protein operates within carbohydrate metabolism; glyoxylate cycle; (S)-malate from isocitrate: step 2/2. This is Malate synthase, glyoxysomal (MLS) from Raphanus sativus (Radish).